The chain runs to 768 residues: Post-transcriptional regulator MKT1 (768 aa).

It belongs to the XPG/RAD2 endonuclease family. In terms of assembly, interacts with PBP1.

The protein resides in the cytoplasm. It is found in the cytosol. Functionally, involved in 3'-UTR mediated RNA regulation. Complexes with PBP1 to promote mRNA interactions with poly(A)-binding protein. The chain is Post-transcriptional regulator MKT1 from Cryptococcus neoformans var. grubii serotype A (strain H99 / ATCC 208821 / CBS 10515 / FGSC 9487) (Filobasidiella neoformans var. grubii).